The chain runs to 405 residues: Pyruvate decarboxylase 2 (405 aa).

The segment at 232–314 is thiamine pyrophosphate binding; that stretch reads DSWFNCQKLK…FLINNGGYTI (83 aa). D282, N309, and G311 together coordinate Mg(2+). Residue E315 coordinates substrate.

It belongs to the TPP enzyme family. In terms of assembly, homotetramer. Requires a metal cation as cofactor. The cofactor is thiamine diphosphate.

It carries out the reaction a 2-oxocarboxylate + H(+) = an aldehyde + CO2. This is Pyruvate decarboxylase 2 (PDC2) from Pisum sativum (Garden pea).